The primary structure comprises 613 residues: Cysteine--tRNA ligase (613 aa).

The disordered stretch occupies residues 1-130; the sequence is MSAGAGTPRR…TRGGVARSGN (130 aa). Tandem repeats lie at residues 36–49, 50–63, 64–77, 78–91, 92–105, and 106–119. Residues 36–119 are 6 X 14 AA tandem repeats of P-[TA]-R-G-D-K-K-R-A-[RP]-R-[PL]-G-V; it reads PTRGDKKRAR…DKKRARRPGV (84 aa). A cysteinyl-tRNA synthetase region spans residues 148-613; it reads VTIRLYDTSA…QGPRWSLGSR (466 aa). Cysteine 176 provides a ligand contact to Zn(2+). The 'HIGH' region motif lies at 178-188; sequence ATVQAAPHIGH. 3 residues coordinate Zn(2+): cysteine 355, histidine 380, and glutamate 384. The short motif at 411-415 is the 'KMSKS' region element; sequence KMSKS. Lysine 414 provides a ligand contact to ATP.

Belongs to the class-I aminoacyl-tRNA synthetase family. As to quaternary structure, monomer. Zn(2+) serves as cofactor.

The protein resides in the cytoplasm. The enzyme catalyses tRNA(Cys) + L-cysteine + ATP = L-cysteinyl-tRNA(Cys) + AMP + diphosphate. The chain is Cysteine--tRNA ligase from Streptomyces coelicolor (strain ATCC BAA-471 / A3(2) / M145).